Reading from the N-terminus, the 317-residue chain is Aspartate carbamoyltransferase catalytic subunit (317 aa).

Arg66 and Thr67 together coordinate carbamoyl phosphate. Lys94 contributes to the L-aspartate binding site. Carbamoyl phosphate is bound by residues Arg116, His144, and Gln147. Arg177 and Arg231 together coordinate L-aspartate. Carbamoyl phosphate-binding residues include Gly272 and Pro273.

This sequence belongs to the aspartate/ornithine carbamoyltransferase superfamily. ATCase family. In terms of assembly, heterododecamer (2C3:3R2) of six catalytic PyrB chains organized as two trimers (C3), and six regulatory PyrI chains organized as three dimers (R2).

The catalysed reaction is carbamoyl phosphate + L-aspartate = N-carbamoyl-L-aspartate + phosphate + H(+). Its pathway is pyrimidine metabolism; UMP biosynthesis via de novo pathway; (S)-dihydroorotate from bicarbonate: step 2/3. Catalyzes the condensation of carbamoyl phosphate and aspartate to form carbamoyl aspartate and inorganic phosphate, the committed step in the de novo pyrimidine nucleotide biosynthesis pathway. The protein is Aspartate carbamoyltransferase catalytic subunit of Beijerinckia indica subsp. indica (strain ATCC 9039 / DSM 1715 / NCIMB 8712).